We begin with the raw amino-acid sequence, 887 residues long: MSSDMAADESEAPVLSEDEVWEFCLDKTEDGGGSPGSDVTDTCEPPCGCWELNPNSLEEEHVLFTADPYLELHNDDTRVVRVKVIAGIGLAKKDILGASDPYVRVTLYDPMSGILTSVQTKTIKKSLNPKWNEEILFRVLPQRHRILFEVFDENRLTRDDFLGQVDVPLYPLPTENPRMERPYTFKDFVLHPRSHKSRVKGYLRLKMTYLPKNGSEDENADQAEELEPGWVVLDQPDAATHLPHPPEPSPLPPGWEERQDVLGRTYYVNHESRRTQWKRPSPDDDLTDEDNDDMQLQAQRAFTTRRQISEDVDGPDNRESPENWEIVREDENTEYSGQAVQSPPSGHIDVQTHLAEEFNTRLAVCGNPATSQPVTSSNHSSRGGSLQTCIFEEQPTLPVLLPTSSGLPPGWEEKQDDRGRSYYVDHNSKTTTWSKPTMQDDPRSKIPAHLRGKTDSNDLGPLPPGWEERTHTDGRVFFINHNIKKTQWEDPRLQNVAITGPAVPYSRDYKRKYEFFRRKLKKQTDIPNKFEMKLRRANILEDSYRRIMGVKRADLLKARLWIEFDGEKGLDYGGVAREWFFLISKEMFNPYYGLFEYSATDNYTLQINPNSGLCNEDHLSYFKFIGRVAGMAVYHGKLLDGFFIRPFYKMMLQKLITLHDMESVDSEYYSSLRWILENDPTELDLRFIIDEELFGQTHQHELKTGGSEIVVTNKNKKEYIYLVIQWRFVNRIQKQMAAFKEGFFELIPQDLIKIFDENELELLMCGLGDVDVNDWREHTKYKNGYSMNHQVIHWFWKAVWMMDSEKRIRLLQFVTGTSRVPMNGFAELYGSNGPQSFTVEQWGTPDKLPRAHTCFNRLDLPPYESFDELWDKLQMAIENTQGFDGVD.

Positions E58–Y183 constitute a C2 domain. S215 is modified (phosphoserine). The tract at residues D217–G549 is mediates interaction with TNIK. Disordered regions lie at residues P236 to E257, E271 to D290, and F302 to E322. A compositionally biased stretch (pro residues) spans P243 to P253. Residues S249–P282 form the WW 1 domain. Phosphothreonine is present on T287. The residue at position 309 (S309) is a Phosphoserine. Residues L354–V364 carry the Nuclear export signal motif. S380 and S385 each carry phosphoserine. WW domains are found at residues S405–M438 and G460–L493. The HECT domain maps to R552–D887. A Glycyl lysine isopeptide (Lys-Gly) (interchain with G-Cter in ubiquitin) cross-link involves residue K847. C854 functions as the Glycyl thioester intermediate in the catalytic mechanism.

In terms of assembly, interacts with NDFIP1 and NDFIP2; this interaction activates the E3 ubiquitin-protein ligase and may induce its recruitment to exosomes. Interacts with UBE2D2. Binds, in vitro, through the WW2 and WW3 domains, to neural isoforms of ENAH that contain the PPSY motif. Interacts with BEAN1, LITAF, RNF11, WBP1, WBP2, PMEPAI and PRRG2. Interacts with murine leukemia virus Gag polyprotein (via PPXY motif). Interacts (via C2 domain) with GRB10 (via SH2 domain). Interacts with ERBB4. Interacts with TNIK; the interaction is direct, allows the TNIK-dependent recruitment of RAP2A and its ubiquitination by NEDD4. Interacts (via WW3 domain) with TNK2; EGF promotes this interaction. Interacts (via WW3 domain) with FGFR1 (via C-terminus). Interacts with OTUD7B. Interacts with ISG15. Interacts (via WW domain) with RAPGEF2; this interaction leads to ubiquitination and degradation via the proteasome pathway. Interacts (via WW domains) with ARRDC3 (via PPXY motifs). Interacts with LAPTM4B; may play a role in the lysosomal sorting of LAPTM4B. Interacts with ZBTB7B. Interacts with PRRG4 (via cytoplasmic domain). Interacts directly with LDLRAD3; this interaction promotes NEDD4 auto-ubiquitination. Interacts with ADRB2. Interacts (via WW domains) with DAZAP2 (via PPAY motif). In terms of processing, undergoes 'Lys-29'-linked auto-ubiquitination at Lys-847 and serves as a scaffold for recruiting USP13 to form an NEDD4-USP13 deubiquitination complex. Brain.

It localises to the cytoplasm. It is found in the nucleus. The protein resides in the cell membrane. It catalyses the reaction S-ubiquitinyl-[E2 ubiquitin-conjugating enzyme]-L-cysteine + [acceptor protein]-L-lysine = [E2 ubiquitin-conjugating enzyme]-L-cysteine + N(6)-ubiquitinyl-[acceptor protein]-L-lysine.. It participates in protein modification; protein ubiquitination. Activated by NDFIP1- and NDFIP2-binding. Functionally, E3 ubiquitin-protein ligase which accepts ubiquitin from an E2 ubiquitin-conjugating enzyme in the form of a thioester and then directly transfers the ubiquitin to targeted substrates. Specifically ubiquitinates 'Lys-63' in target proteins. Monoubiquitinates IGF1R at multiple sites, thus leading to receptor internalization and degradation in lysosomes. Ubiquitinates FGFR1, leading to receptor internalization and degradation in lysosomes. Involved in ubiquitination of ERBB4 intracellular domain E4ICD1. Predominantly involved in ubiquitination of membrane bound forms of ERBB4 rather than processed precursors and intermediate membrane-anchored 80 kDa fragments (m80HER4), with a lesser role in ubiquitination of ERBB4 intracellular domain E4ICD1. Promotes ubiquitination of RAPGEF2. Involved in the pathway leading to the degradation of VEGFR-2/KDFR, independently of its ubiquitin-ligase activity. Part of a signaling complex composed of NEDD4, RAP2A and TNIK which regulates neuronal dendrite extension and arborization during development. Ubiquitinates TNK2 and regulates EGF-induced degradation of EGFR and TNF2. Ubiquitinates BRAT1 and this ubiquitination is enhanced in the presence of NDFIP1. Ubiquitinates DAZAP2, leading to its proteasomal degradation. Ubiquitinates POLR2A. Functions as a platform to recruit USP13 to form an NEDD4-USP13 deubiquitination complex that plays a critical role in cleaving the 'Lys-48'-linked ubiquitin chains of VPS34 and then stabilizing VPS34, thus promoting the formation of autophagosomes. The protein is E3 ubiquitin-protein ligase NEDD4 (Nedd4) of Mus musculus (Mouse).